The following is a 347-amino-acid chain: Ribosomal RNA small subunit methyltransferase C (347 aa).

The protein belongs to the methyltransferase superfamily. RsmC family. Monomer.

The protein localises to the cytoplasm. It carries out the reaction guanosine(1207) in 16S rRNA + S-adenosyl-L-methionine = N(2)-methylguanosine(1207) in 16S rRNA + S-adenosyl-L-homocysteine + H(+). Specifically methylates the guanine in position 1207 of 16S rRNA in the 30S particle. This Yersinia pseudotuberculosis serotype O:1b (strain IP 31758) protein is Ribosomal RNA small subunit methyltransferase C.